A 378-amino-acid chain; its full sequence is B3 domain-containing protein Os03g0622200 (378 aa).

Positions 29–124 (SKHFLKHMVG…SFDVLIFDPS (96 aa)) form a DNA-binding region, TF-B3 1. Residues 140 to 159 (GRAENSAGAEQGGRNGRRTP) form a disordered region. A DNA-binding region (TF-B3 2) is located at residues 256 to 370 (FVQVIHSSHV…TMTVHVLRRV (115 aa)).

Its subcellular location is the nucleus. The protein is B3 domain-containing protein Os03g0622200 of Oryza sativa subsp. japonica (Rice).